A 172-amino-acid polypeptide reads, in one-letter code: MISSDPEAVSASAYREAMAQLASAVHLVTTDGPGGRAGLTATSVCSVSDGPPTLLVCLNRNSSAYPAFLRNGVLCINTLTAAHEGLATDFAGRVPQAERFAGPDWGRLQTGAPVLAGALVAFDCRIVDRHEVGTHDVLICAVEALAEISGAESLLYAGRHYRVLPRPDSESD.

Belongs to the non-flavoprotein flavin reductase family. RutF subfamily.

The catalysed reaction is FMNH2 + NAD(+) = FMN + NADH + 2 H(+). Its function is as follows. Catalyzes the reduction of FMN to FMNH2 which is used to reduce pyrimidine by RutA via the Rut pathway. In Methylorubrum extorquens (strain PA1) (Methylobacterium extorquens), this protein is FMN reductase (NADH) RutF 2.